The chain runs to 549 residues: Cytoplasmic trehalase (549 aa).

Residues R168, 175 to 176, N212, 221 to 223, 292 to 294, and G324 each bind substrate; these read WD, RSQ, and RDE. Active-site proton donor/acceptor residues include D326 and E509. E525 provides a ligand contact to substrate.

The protein belongs to the glycosyl hydrolase 37 family. As to quaternary structure, monomer.

It is found in the cytoplasm. The catalysed reaction is alpha,alpha-trehalose + H2O = alpha-D-glucose + beta-D-glucose. It functions in the pathway glycan degradation; trehalose degradation; D-glucose from alpha,alpha-trehalose: step 1/1. Functionally, hydrolyzes trehalose to glucose. Could be involved, in cells returning to low osmolarity conditions, in the utilization of the accumulated cytoplasmic trehalose, which was synthesized in response to high osmolarity. The sequence is that of Cytoplasmic trehalase from Escherichia coli (strain 55989 / EAEC).